The primary structure comprises 334 residues: Syntaxin-18 (334 aa).

The Cytoplasmic segment spans residues 1 to 308; the sequence is MAVDITLLFR…EDIREAIKNN (308 aa). 2 disordered regions span residues 29 to 50 and 166 to 225; these read GGAD…GDFS and LSKL…GEDE. Composition is skewed to basic and acidic residues over residues 33 to 50, 166 to 186, and 193 to 207; these read GSRD…GDFS, LSKL…EKSS, and SEEK…EKPL. Residues 242–304 enclose the t-SNARE coiled-coil homology domain; the sequence is IGEMNSLFDE…KEGNEDIREA (63 aa). The chain crosses the membrane as a helical; Anchor for type IV membrane protein span at residues 309 to 329; it reads AGFRVWILFFLVMCSFSLLFL. Over 330-334 the chain is Vesicular; it reads DWYDS.

The protein belongs to the syntaxin family. Component of a SNARE complex consisting of STX18, USE1L, BNIP1/SEC20L, and SEC22B. RINT1/TIP20L and ZW10 are associated with the complex through interaction with BNIP1/SEC20L. Interacts directly with USE1L and BNIP1/SEC20L.

It localises to the endoplasmic reticulum membrane. It is found in the golgi apparatus membrane. In terms of biological role, syntaxin that may be involved in targeting and fusion of Golgi-derived retrograde transport vesicles with the ER. The polypeptide is Syntaxin-18 (Stx18) (Rattus norvegicus (Rat)).